The primary structure comprises 384 residues: Intraflagellar transport protein 46 homolog (384 aa).

Disordered stretches follow at residues 52–151 (VNAE…PADY) and 358–384 (SATD…LTLD). The span at 87–99 (EKLEEDTKRKKEP) shows a compositional bias: basic and acidic residues. Positions 110–138 (DEEEDEDDDDDDDDDDSDDTESDEEEEEP) are enriched in acidic residues. Over residues 358-374 (SATDGQKSDTPPASRSA) the composition is skewed to polar residues.

Belongs to the IFT46 family.

The protein localises to the cytoplasm. The protein resides in the cytoskeleton. It localises to the cilium basal body. Its subcellular location is the cell projection. It is found in the cilium. In terms of biological role, forms part of a complex involved in intraflagellar transport (IFT), the bi-directional movement of particles required for the assembly, maintenance and functioning of primary cilia. Plays a role in early embryonic development. The chain is Intraflagellar transport protein 46 homolog from Danio rerio (Zebrafish).